Reading from the N-terminus, the 445-residue chain is Exodeoxyribonuclease 7 large subunit (445 aa).

The protein belongs to the XseA family. Heterooligomer composed of large and small subunits.

The protein localises to the cytoplasm. The catalysed reaction is Exonucleolytic cleavage in either 5'- to 3'- or 3'- to 5'-direction to yield nucleoside 5'-phosphates.. Its function is as follows. Bidirectionally degrades single-stranded DNA into large acid-insoluble oligonucleotides, which are then degraded further into small acid-soluble oligonucleotides. This chain is Exodeoxyribonuclease 7 large subunit, found in Staphylococcus aureus (strain JH1).